The sequence spans 365 residues: Phosphatidylcholine:ceramide cholinephosphotransferase 2 (365 aa).

Basic and acidic residues predominate over residues 1–14; it reads MDIIETAKLEEHLE. Residues 1–52 are disordered; sequence MDIIETAKLEEHLENQPSDPTNTYARPAEPVEEENKNGNGKPKSLSSGLRKG. The span at 15 to 24 shows a compositional bias: polar residues; it reads NQPSDPTNTY. Helical transmembrane passes span 80 to 100, 128 to 148, 159 to 179, and 206 to 226; these read GIAF…ITVV, FSVS…QWLF, FCFI…VTTL, and LISG…DFLF. Residue H229 is part of the active site. The helical transmembrane segment at 248 to 268 threads the bilayer; it reads FWWYHLICWLLSAAGIICILV. Active-site residues include H272 and D276. The helical transmembrane segment at 275–295 threads the bilayer; the sequence is IDVIIAYYITTRLFWWYHSMA. Over 296 to 365 the chain is Cytoplasmic; that stretch reads NEKNLKVSSQ…KIGEDNEKST (70 aa). Residues C331, C332, C343, and C348 are each lipidated (S-palmitoyl cysteine).

The protein belongs to the sphingomyelin synthase family. In terms of processing, palmitoylated on Cys-331, Cys-332, Cys-343 and Cys-348; which plays an important role in plasma membrane localization. Brain, heart, kidney, liver, muscle and stomach. Also expressed in a number of cell lines such as carcinoma HeLa cells, hepatoma Hep-G2 cells, and colon carcinoma Caco-2 cells.

The protein localises to the cell membrane. Its subcellular location is the golgi apparatus membrane. It catalyses the reaction an N-acylsphing-4-enine + a 1,2-diacyl-sn-glycero-3-phosphocholine = a sphingomyelin + a 1,2-diacyl-sn-glycerol. It carries out the reaction an N-acylsphinganine + a 1,2-diacyl-sn-glycero-3-phosphocholine = an N-acylsphinganine-1-phosphocholine + a 1,2-diacyl-sn-glycerol. The catalysed reaction is an N-acyl-(4R)-4-hydroxysphinganine + a 1,2-diacyl-sn-glycero-3-phosphocholine = an N-acyl-(4R)-4-hydroxysphinganine-phosphocholine + a 1,2-diacyl-sn-glycerol. The enzyme catalyses an N-acylsphinganine + a 1,2-diacyl-sn-glycero-3-phosphoethanolamine = an N-acylsphinganine-1-phosphoethanolamine + a 1,2-diacyl-sn-glycerol. It catalyses the reaction an N-acyl-(4R)-4-hydroxysphinganine + a 1,2-diacyl-sn-glycero-3-phosphoethanolamine = an N-acyl-(4R)-4-hydroxysphinganine-1-phosphoethanolamine + a 1,2-diacyl-sn-glycerol. It carries out the reaction an N-acylsphing-4-enine + a 1,2-diacyl-sn-glycero-3-phosphoethanolamine = an N-acylsphing-4-enine 1-phosphoethanolamine + a 1,2-diacyl-sn-glycerol. The catalysed reaction is 1,2-dihexadecanoyl-sn-glycero-3-phosphocholine + an N-acylsphing-4-enine = 1,2-dihexadecanoyl-sn-glycerol + a sphingomyelin. The enzyme catalyses 1-(9Z-octadecenoyl)-2-acyl-sn-3-glycerol + a sphingomyelin = a 1-(9Z-octadecenoyl)-2-acyl-sn-glycero-3-phosphocholine + an N-acylsphing-4-enine. It catalyses the reaction N-hexadecanoylsphinganine + a 1,2-diacyl-sn-glycero-3-phosphocholine = N-hexadecanoyl-sphinganine-1-phosphocholine + a 1,2-diacyl-sn-glycerol. It carries out the reaction N-hexadecanoyl-(4R)-hydroxysphinganine + a 1,2-diacyl-sn-glycero-3-phosphocholine = N-hexadecanoyl-(4R)-hydroxysphinganine-phosphocholine + a 1,2-diacyl-sn-glycerol. The catalysed reaction is N-hexadecanoylsphinganine + a 1,2-diacyl-sn-glycero-3-phosphoethanolamine = N-hexadecanoyl-sphinganine-1-phosphoethanolamine + a 1,2-diacyl-sn-glycerol. The enzyme catalyses N-hexadecanoyl-(4R)-hydroxysphinganine + a 1,2-diacyl-sn-glycero-3-phosphoethanolamine = N-hexadecanoyl-(4R)-hydroxysphinganine-1-phosphoethanolamine + a 1,2-diacyl-sn-glycerol. The protein operates within sphingolipid metabolism. Inhibited by bacterial PC-phospholipase C inhibitor D609. Functionally, sphingomyelin synthase that primarily contributes to sphingomyelin synthesis and homeostasis at the plasma membrane. Catalyzes the reversible transfer of phosphocholine moiety in sphingomyelin biosynthesis: in the forward reaction transfers phosphocholine head group of phosphatidylcholine (PC) on to ceramide (CER) to form ceramide phosphocholine (sphingomyelin, SM) and diacylglycerol (DAG) as by-product, and in the reverse reaction transfers phosphocholine from SM to DAG to form PC and CER. The direction of the reaction appears to depend on the levels of CER and DAG in the plasma membrane. Does not use free phosphorylcholine or CDP-choline as donors. Can also transfer phosphoethanolamine head group of phosphatidylethanolamine (PE) on to ceramide (CER) to form ceramide phosphoethanolamine (CPE). Regulates receptor-mediated signal transduction via mitogenic DAG and proapoptotic CER, as well as via SM, a structural component of membrane rafts that serve as platforms for signal transduction and protein sorting. To a lesser extent, plays a role in secretory transport via regulation of DAG pool at the Golgi apparatus and its downstream effects on PRKD1. Required for normal bone matrix mineralization. This Homo sapiens (Human) protein is Phosphatidylcholine:ceramide cholinephosphotransferase 2.